A 250-amino-acid polypeptide reads, in one-letter code: 5'-nucleotidase SurE (250 aa).

Positions 8, 9, 40, and 95 each coordinate a divalent metal cation.

The protein belongs to the SurE nucleotidase family. A divalent metal cation serves as cofactor.

It is found in the cytoplasm. It catalyses the reaction a ribonucleoside 5'-phosphate + H2O = a ribonucleoside + phosphate. Functionally, nucleotidase that shows phosphatase activity on nucleoside 5'-monophosphates. In Nitratidesulfovibrio vulgaris (strain DP4) (Desulfovibrio vulgaris), this protein is 5'-nucleotidase SurE.